Consider the following 233-residue polypeptide: Uracil-DNA glycosylase (233 aa).

Aspartate 70 (proton acceptor) is an active-site residue.

Belongs to the uracil-DNA glycosylase (UDG) superfamily. UNG family.

It is found in the cytoplasm. It carries out the reaction Hydrolyzes single-stranded DNA or mismatched double-stranded DNA and polynucleotides, releasing free uracil.. Its function is as follows. Excises uracil residues from the DNA which can arise as a result of misincorporation of dUMP residues by DNA polymerase or due to deamination of cytosine. This is Uracil-DNA glycosylase from Helicobacter pylori (strain G27).